Here is a 314-residue protein sequence, read N- to C-terminus: Putative glycosyltransferase ORF31 (314 aa).

It belongs to the glycosyltransferase group 1 family.

This chain is Putative glycosyltransferase ORF31, found in Haloarcula hispanica (His1V).